A 154-amino-acid chain; its full sequence is Putative ankyrin repeat protein RBE_1220 (154 aa).

2 ANK repeats span residues 78–108 and 113–142; these read EKVN…NVDQ and NSRT…ILIL.

The chain is Putative ankyrin repeat protein RBE_1220 from Rickettsia bellii (strain RML369-C).